A 708-amino-acid chain; its full sequence is Caprin-1 (708 aa).

2 stretches are compositionally biased toward low complexity: residues 1-15 (MPSATSHSGSGSKSS) and 22-37 (GSSGNEAGAGAAAPAS). The interval 1–48 (MPSATSHSGSGSKSSGPPPPSGSSGNEAGAGAAAPASQHPMTGTGAVQ) is disordered. The residue at position 2 (proline 2) is an N-acetylproline. Serine 10 carries the post-translational modification Phosphoserine. The stretch at 58-92 (VIDKKLRNLEKKKGKLDDYQERMNKGERLNQDQLD) forms a coiled coil. Residue serine 113 is modified to Phosphoserine. The stretch at 123 to 151 (KTIKKTARREQLMREEAEQKRLKTVLELQ) forms a coiled coil. Arginine 163 is subject to Omega-N-methylarginine. Positions 258–287 (EEAASAPTVEDQAAEAEPEPVEEYTEQNEV) are disordered. Positions 269–287 (QAAEAEPEPVEEYTEQNEV) are enriched in acidic residues. Serine 333 and serine 341 each carry phosphoserine. The G3BP1-binding stretch occupies residues 358–379 (QDLMAQMQGPYNFIQDSMLDFE). The span at 415-452 (LAQPNQVSVQPEATQVPLVSSTSEGYTASQPLYQPSHA) shows a compositional bias: polar residues. Disordered stretches follow at residues 415–459 (LAQP…RPQK), 473–497 (TDQTTASSSLPAASQPQVFQAGTSK), 521–559 (NAPVPPVNEPETLKQQNQYQASYNQSFSSQPHQVEQTEL), and 571–708 (YHGS…QQVN). 2 stretches are compositionally biased toward low complexity: residues 475-489 (QTTASSSLPAASQPQ) and 535-559 (QQNQYQASYNQSFSSQPHQVEQTEL). The span at 572-603 (HGSQDQPHQVTGNHQQPPQQNTGFPRSNQPYY) shows a compositional bias: polar residues. At tyrosine 623 the chain carries Phosphotyrosine. Residues arginine 624 and arginine 631 each carry the omega-N-methylarginine modification. A phosphotyrosine mark is found at tyrosine 634 and tyrosine 637. Position 638 is an omega-N-methylarginine (arginine 638). A compositionally biased stretch (polar residues) spans 640-656 (SFSTNTPNSGYTQSQFS). Serine 642 and serine 648 each carry an O-linked (GlcNAc) serine glycan. Tyrosine 650, tyrosine 661, tyrosine 664, and tyrosine 669 each carry phosphotyrosine. 2 stretches are compositionally biased toward low complexity: residues 675-685 (RGSGQSGPRGA) and 696-708 (NRGMPQMNTQQVN). Arginine 697 carries the post-translational modification Asymmetric dimethylarginine; alternate. Arginine 697 bears the Omega-N-methylarginine; alternate mark.

The protein belongs to the caprin family. In terms of assembly, may form homomultimers. Interacts with G3BP1; interaction is direct and promotes stress granule formation. Interacts with G3BP2; interaction is direct and promotes stress granule formation. Interacts with PQBP1. Interacts with DDX3X. Interacts (when phosphorylated by EPHA4) with FMR1; interaction with FMR1 promotes formation of a membraneless compartment. In terms of processing, tyrosine phosphorylation by EPHA4 promotes interaction with FMR1 and liquid-liquid phase separation (LLPS) for the formation of a membraneless compartment that concentrates mRNAs with associated regulatory factors. Post-translationally, O-glycosylated (O-GlcNAcylated), in a cell cycle-dependent manner. O-glycosylation by OGT inhibit ability to undergo liquid-liquid phase separation (LLPS).

It localises to the cytoplasm. It is found in the cytoplasmic ribonucleoprotein granule. The protein localises to the cytosol. Its subcellular location is the cell projection. The protein resides in the dendrite. It localises to the lamellipodium. Ability to mediate liquid-liquid phase separation is regulated by ATP: moderate concentrations of ATP enhance phase separation, whereas high concentrations of ATP lead to inhibition of phase separation. In terms of biological role, mRNA-binding protein that acts as a regulator of mRNAs transport, translation and/or stability, and which is involved in neurogenesis, synaptic plasticity in neurons and cell proliferation and migration in multiple cell types. Plays an essential role in cytoplasmic stress granule formation. Acts as an mRNA regulator by mediating formation of some phase-separated membraneless compartment: undergoes liquid-liquid phase separation upon binding to target mRNAs, leading to assemble mRNAs into cytoplasmic ribonucleoprotein granules that concentrate mRNAs with associated regulatory factors. Undergoes liquid-liquid phase separation following phosphorylation and interaction with FMR1, promoting formation of cytoplasmic ribonucleoprotein granules that concentrate mRNAs with factors that inhibit translation and mediate deadenylation of target mRNAs. In these cytoplasmic ribonucleoprotein granules, CAPRIN1 mediates recruitment of CNOT7 deadenylase, leading to mRNA deadenylation and degradation. Binds directly and selectively to MYC and CCND2 mRNAs. In neuronal cells, directly binds to several mRNAs associated with RNA granules, including BDNF, CAMK2A, CREB1, MAP2, NTRK2 mRNAs, as well as to GRIN1 and KPNB1 mRNAs, but not to rRNAs. This is Caprin-1 (CAPRIN1) from Bos taurus (Bovine).